The primary structure comprises 170 residues: Putative pre-16S rRNA nuclease (170 aa).

The interval 1-29 (MVAASHRSPDRPGDPEGLEPGTGRGRRLG) is disordered.

Belongs to the YqgF nuclease family.

It localises to the cytoplasm. Could be a nuclease involved in processing of the 5'-end of pre-16S rRNA. The sequence is that of Putative pre-16S rRNA nuclease from Mycobacterium ulcerans (strain Agy99).